Reading from the N-terminus, the 356-residue chain is MISKEEILEILNGYDLKNITIATVCSHSSLQIFHGAKQEGFRTLGICIGPPPRFYDAFPLAKPDAFISLDSYKAMLDESDRLIDENAIIIPHGSMVEYLGIQNFEALPVPTFGNRRCLAWESDREMEREWLLRAGVNVPMRFENAELIDRPVIVKYHGAKGGKGFFIAKNKEEFQSKIQQGQKYTIQEFILGTRYYIHFFYSPIREKGYRLRKGTLDMLGIDRRVESNADEIFRIGSVNELEAAGIYPSFVVTGNLPLVLRESLLPKVFDLGERVVETSIELFGGMVGPFSLETIVTDDLDFKVFEISARIVAGTNLFISGSPYSDLIEKGLSTGRRIAQEIALARSMGALGEVIS.

His-27 and Ser-94 together coordinate 5-amino-1-(5-phospho-beta-D-ribosyl)imidazole-4-carboxamide. One can recognise an ATP-grasp domain in the interval Arg-116–Ser-333. Residues Ala-145–Tyr-196 and Glu-226 contribute to the ATP site. Asn-255 provides a ligand contact to 5-amino-1-(5-phospho-beta-D-ribosyl)imidazole-4-carboxamide. The Mg(2+) site is built by Glu-293 and Glu-306.

The protein belongs to the phosphohexose mutase family. It depends on Mg(2+) as a cofactor. Requires Mn(2+) as cofactor.

The enzyme catalyses 5-amino-1-(5-phospho-beta-D-ribosyl)imidazole-4-carboxamide + formate + ATP = 5-formamido-1-(5-phospho-D-ribosyl)imidazole-4-carboxamide + ADP + phosphate. It participates in purine metabolism; IMP biosynthesis via de novo pathway; 5-formamido-1-(5-phospho-D-ribosyl)imidazole-4-carboxamide from 5-amino-1-(5-phospho-D-ribosyl)imidazole-4-carboxamide (formate route): step 1/1. In terms of biological role, catalyzes the ATP- and formate-dependent formylation of 5-aminoimidazole-4-carboxamide-1-beta-d-ribofuranosyl 5'-monophosphate (AICAR) to 5-formaminoimidazole-4-carboxamide-1-beta-d-ribofuranosyl 5'-monophosphate (FAICAR) in the absence of folates. The polypeptide is 5-formaminoimidazole-4-carboxamide-1-(beta)-D-ribofuranosyl 5'-monophosphate synthetase (Methanothrix thermoacetophila (strain DSM 6194 / JCM 14653 / NBRC 101360 / PT) (Methanosaeta thermophila)).